A 395-amino-acid chain; its full sequence is ATP-dependent RNA helicase eIF4A (395 aa).

The Q motif motif lies at 22 to 50 (TSFDDLGLKDELLRGIYGYGFENPSSIQQ). One can recognise a Helicase ATP-binding domain in the interval 53 to 223 (ILPVIKGNDV…GKFMRDPVRI (171 aa)). 66–73 (AQSGTGKT) is an ATP binding site. The short motif at 171–174 (DEAD) is the DEAD box element. Residues 234 to 395 (GIKQFYIDVE…EMPTNIADLI (162 aa)) enclose the Helicase C-terminal domain.

Belongs to the DEAD box helicase family. eIF4A subfamily. In terms of assembly, component of the eIF4F complex, which composition varies with external and internal environmental conditions. It is composed of at least eIF4A, eIF4E and eIF4G.

It localises to the cytoplasm. The catalysed reaction is ATP + H2O = ADP + phosphate + H(+). Its function is as follows. ATP-dependent RNA helicase which is a subunit of the eIF4F complex involved in cap recognition and is required for mRNA binding to ribosome. In the current model of translation initiation, eIF4A unwinds RNA secondary structures in the 5'-UTR of mRNAs which is necessary to allow efficient binding of the small ribosomal subunit, and subsequent scanning for the initiator codon. The sequence is that of ATP-dependent RNA helicase eIF4A (TIF1) from Yarrowia lipolytica (strain CLIB 122 / E 150) (Yeast).